We begin with the raw amino-acid sequence, 365 residues long: Peptide chain release factor 2 (365 aa).

Position 252 is an N5-methylglutamine (glutamine 252).

This sequence belongs to the prokaryotic/mitochondrial release factor family. Post-translationally, methylated by PrmC. Methylation increases the termination efficiency of RF2.

It localises to the cytoplasm. Its function is as follows. Peptide chain release factor 2 directs the termination of translation in response to the peptide chain termination codons UGA and UAA. In Escherichia coli (strain K12 / MC4100 / BW2952), this protein is Peptide chain release factor 2.